The sequence spans 156 residues: rRNA methyltransferase (156 aa).

Functionally, modifies 16S rRNA so making ribosomes resistant to certain aminoglycosides. This is rRNA methyltransferase (kamC) from Saccharopolyspora hirsuta.